Here is a 571-residue protein sequence, read N- to C-terminus: Dihydroxy-acid dehydratase (571 aa).

C56 contacts [2Fe-2S] cluster. D88 lines the Mg(2+) pocket. Residue C129 coordinates [2Fe-2S] cluster. The Mg(2+) site is built by D130 and K131. At K131 the chain carries N6-carboxylysine. C201 contributes to the [2Fe-2S] cluster binding site. E452 contributes to the Mg(2+) binding site. S478 functions as the Proton acceptor in the catalytic mechanism.

It belongs to the IlvD/Edd family. Homodimer. Requires [2Fe-2S] cluster as cofactor. Mg(2+) serves as cofactor.

It carries out the reaction (2R)-2,3-dihydroxy-3-methylbutanoate = 3-methyl-2-oxobutanoate + H2O. The enzyme catalyses (2R,3R)-2,3-dihydroxy-3-methylpentanoate = (S)-3-methyl-2-oxopentanoate + H2O. It participates in amino-acid biosynthesis; L-isoleucine biosynthesis; L-isoleucine from 2-oxobutanoate: step 3/4. The protein operates within amino-acid biosynthesis; L-valine biosynthesis; L-valine from pyruvate: step 3/4. Functionally, functions in the biosynthesis of branched-chain amino acids. Catalyzes the dehydration of (2R,3R)-2,3-dihydroxy-3-methylpentanoate (2,3-dihydroxy-3-methylvalerate) into 2-oxo-3-methylpentanoate (2-oxo-3-methylvalerate) and of (2R)-2,3-dihydroxy-3-methylbutanoate (2,3-dihydroxyisovalerate) into 2-oxo-3-methylbutanoate (2-oxoisovalerate), the penultimate precursor to L-isoleucine and L-valine, respectively. In Streptococcus suis (strain 98HAH33), this protein is Dihydroxy-acid dehydratase.